Here is a 197-residue protein sequence, read N- to C-terminus: Protein GrpE (197 aa).

The segment at 1-40 (MSSKEQKTPEGQAPEEIIMDRHEEIEAVEPEASAEQVDPR) is disordered.

This sequence belongs to the GrpE family. As to quaternary structure, homodimer.

The protein resides in the cytoplasm. Participates actively in the response to hyperosmotic and heat shock by preventing the aggregation of stress-denatured proteins, in association with DnaK and GrpE. It is the nucleotide exchange factor for DnaK and may function as a thermosensor. Unfolded proteins bind initially to DnaJ; upon interaction with the DnaJ-bound protein, DnaK hydrolyzes its bound ATP, resulting in the formation of a stable complex. GrpE releases ADP from DnaK; ATP binding to DnaK triggers the release of the substrate protein, thus completing the reaction cycle. Several rounds of ATP-dependent interactions between DnaJ, DnaK and GrpE are required for fully efficient folding. The polypeptide is Protein GrpE (Shigella flexneri serotype 5b (strain 8401)).